We begin with the raw amino-acid sequence, 92 residues long: C-C motif chemokine 4 (92 aa).

An N-terminal signal peptide occupies residues 1–23 (MKLCVTVLSLLMLVAAFCSPALS). 2 disulfide bridges follow: C34–C58 and C35–C74.

It belongs to the intercrine beta (chemokine CC) family. As to quaternary structure, homodimer and heterodimer of MIP-1-alpha(4-69) and MIP-1-beta(3-69). N-terminal processed form MIP-1-beta(3-69) is produced by proteolytic cleavage after secretion from peripheral blood lymphocytes.

Its subcellular location is the secreted. In terms of biological role, monokine with inflammatory and chemokinetic properties. Binds to CCR5. One of the major HIV-suppressive factors produced by CD8+ T-cells. Recombinant MIP-1-beta induces a dose-dependent inhibition of different strains of HIV-1, HIV-2, and simian immunodeficiency virus (SIV). The processed form MIP-1-beta(3-69) retains the abilities to induce down-modulation of surface expression of the chemokine receptor CCR5 and to inhibit the CCR5-mediated entry of HIV-1 in T-cells. MIP-1-beta(3-69) is also a ligand for CCR1 and CCR2 isoform B. The polypeptide is C-C motif chemokine 4 (CCL4) (Homo sapiens (Human)).